A 120-amino-acid chain; its full sequence is Anti-adapter protein IraM (120 aa).

It belongs to the IraM/RssC family.

It localises to the cytoplasm. Involved in the stabilization of the sigma stress factor RpoS. The polypeptide is Anti-adapter protein IraM (Salmonella typhimurium (strain LT2 / SGSC1412 / ATCC 700720)).